The chain runs to 259 residues: Thiazole synthase (259 aa).

The Schiff-base intermediate with DXP role is filled by K95. 1-deoxy-D-xylulose 5-phosphate contacts are provided by residues G156, 182–183 (AG), and 204–205 (NT).

Belongs to the ThiG family. As to quaternary structure, homotetramer. Forms heterodimers with either ThiH or ThiS.

The protein resides in the cytoplasm. The enzyme catalyses [ThiS sulfur-carrier protein]-C-terminal-Gly-aminoethanethioate + 2-iminoacetate + 1-deoxy-D-xylulose 5-phosphate = [ThiS sulfur-carrier protein]-C-terminal Gly-Gly + 2-[(2R,5Z)-2-carboxy-4-methylthiazol-5(2H)-ylidene]ethyl phosphate + 2 H2O + H(+). The protein operates within cofactor biosynthesis; thiamine diphosphate biosynthesis. Its function is as follows. Catalyzes the rearrangement of 1-deoxy-D-xylulose 5-phosphate (DXP) to produce the thiazole phosphate moiety of thiamine. Sulfur is provided by the thiocarboxylate moiety of the carrier protein ThiS. In vitro, sulfur can be provided by H(2)S. This Proteus mirabilis (strain HI4320) protein is Thiazole synthase.